Consider the following 534-residue polypeptide: Potential RNA-dependent RNA polymerase (534 aa).

The RdRp catalytic domain occupies 255-373; it reads DVVVCTDFSK…TYPGISAEDV (119 aa).

Its subcellular location is the virion. It carries out the reaction RNA(n) + a ribonucleoside 5'-triphosphate = RNA(n+1) + diphosphate. Its function is as follows. RNA-directed RNA polymerase that is involved in both transcription and genome replication. The sequence is that of Potential RNA-dependent RNA polymerase (Segment-2) from Human picobirnavirus (strain Human/Thailand/Hy005102/-) (PBV).